The following is a 208-amino-acid chain: Large ribosomal subunit protein bL17 (208 aa).

The tract at residues 122-208 is disordered; it reads TEKKKKKPAK…ASEEAPPKTE (87 aa). A compositionally biased stretch (low complexity) spans 151-179; the sequence is ADTPAPAAEESAPAKAAEPEAEAAAPEAE.

Belongs to the bacterial ribosomal protein bL17 family. Part of the 50S ribosomal subunit. Contacts protein L32.

The chain is Large ribosomal subunit protein bL17 from Desulfosudis oleivorans (strain DSM 6200 / JCM 39069 / Hxd3) (Desulfococcus oleovorans).